A 141-amino-acid polypeptide reads, in one-letter code: Hemoglobin subunit alpha (141 aa).

The 141-residue stretch at valine 1 to arginine 141 folds into the Globin domain. Residue serine 3 is modified to Phosphoserine. An N6-succinyllysine mark is found at lysine 7 and lysine 11. Lysine 16 is modified (N6-acetyllysine; alternate). Lysine 16 bears the N6-succinyllysine; alternate mark. Tyrosine 24 is modified (phosphotyrosine). Serine 35 carries the post-translational modification Phosphoserine. N6-succinyllysine is present on lysine 40. Residue serine 49 is modified to Phosphoserine. O2 is bound at residue histidine 58. Histidine 87 lines the heme b pocket. Serine 102 carries the phosphoserine modification. Threonine 108 is subject to Phosphothreonine. Serine 124 is modified (phosphoserine). 2 positions are modified to phosphothreonine: threonine 134 and threonine 137. Serine 138 carries the post-translational modification Phosphoserine.

It belongs to the globin family. Heterotetramer of two alpha chains and two beta chains. As to expression, red blood cells.

Involved in oxygen transport from the lung to the various peripheral tissues. Its function is as follows. Hemopressin acts as an antagonist peptide of the cannabinoid receptor CNR1. Hemopressin-binding efficiently blocks cannabinoid receptor CNR1 and subsequent signaling. The polypeptide is Hemoglobin subunit alpha (HBA) (Rangifer tarandus (Reindeer)).